Reading from the N-terminus, the 529-residue chain is GMP synthase [glutamine-hydrolyzing] (529 aa).

One can recognise a Glutamine amidotransferase type-1 domain in the interval 3–204 (TVAIVDFGSQ…FLKIAGCTRD (202 aa)). Catalysis depends on Cys87, which acts as the Nucleophile. Catalysis depends on residues His179 and Glu181. A GMPS ATP-PPase domain is found at 205–395 (WTMGSFLHTQ…LGLPSAILDR (191 aa)). 232 to 238 (SGGVDSS) is a binding site for ATP.

As to quaternary structure, homodimer.

The enzyme catalyses XMP + L-glutamine + ATP + H2O = GMP + L-glutamate + AMP + diphosphate + 2 H(+). The protein operates within purine metabolism; GMP biosynthesis; GMP from XMP (L-Gln route): step 1/1. Functionally, catalyzes the synthesis of GMP from XMP. In Anaplasma marginale (strain St. Maries), this protein is GMP synthase [glutamine-hydrolyzing].